Here is a 276-residue protein sequence, read N- to C-terminus: Malectin-B (276 aa).

Residues 1–26 (MLSIRTVLGPLAAILLTVIGPFGAHG) form the signal peptide. Residues 27-253 (SGLADKVMWA…TPNPYASDNS (227 aa)) lie on the Lumenal side of the membrane. The a carbohydrate site is built by Y67, Y89, Y116, F117, and D186. A disordered region spans residues 202–249 (DVPQLQPHPGLEKKEEEEEEEEEEGSPSKKQSNKNRVQSGPRTPNPYA). Acidic residues predominate over residues 216 to 226 (EEEEEEEEEEG). Positions 229–249 (SKKQSNKNRVQSGPRTPNPYA) are enriched in polar residues. A glycan (N-linked (GlcNAc...) asparagine) is linked at N252. Residues 254 to 274 (SLMFPILVAFGVFIPTLFCLC) traverse the membrane as a helical segment. The Cytoplasmic portion of the chain corresponds to 275-276 (RL).

This sequence belongs to the malectin family.

The protein localises to the endoplasmic reticulum membrane. Carbohydrate-binding protein with a strong ligand preference for Glc2-N-glycan. May play a role in the early steps of protein N-glycosylation. Can bind di- or higher oligomers but not monomers of glucose, including maltose, maltotriose, maltotetraose, maltoheptaose, nigerose, kojibose, cellobiose and isomaltose, although based on their subcellular locations, these are unlikely to all be physiological ligands. In Xenopus laevis (African clawed frog), this protein is Malectin-B.